A 77-amino-acid chain; its full sequence is ATP synthase subunit c (77 aa).

2 helical membrane-spanning segments follow: residues 10–30 and 57–77; these read IAVALLIGFGAIGTAVGFGNM and GLIDAVAMIGVGIAMVLLFVL.

The protein belongs to the ATPase C chain family. As to quaternary structure, F-type ATPases have 2 components, F(1) - the catalytic core - and F(0) - the membrane proton channel. F(1) has five subunits: alpha(3), beta(3), gamma(1), delta(1), epsilon(1). F(0) has three main subunits: a(1), b(2) and c(10-14). The alpha and beta chains form an alternating ring which encloses part of the gamma chain. F(1) is attached to F(0) by a central stalk formed by the gamma and epsilon chains, while a peripheral stalk is formed by the delta and b chains.

It localises to the cell inner membrane. In terms of biological role, f(1)F(0) ATP synthase produces ATP from ADP in the presence of a proton or sodium gradient. F-type ATPases consist of two structural domains, F(1) containing the extramembraneous catalytic core and F(0) containing the membrane proton channel, linked together by a central stalk and a peripheral stalk. During catalysis, ATP synthesis in the catalytic domain of F(1) is coupled via a rotary mechanism of the central stalk subunits to proton translocation. Its function is as follows. Key component of the F(0) channel; it plays a direct role in translocation across the membrane. A homomeric c-ring of between 10-14 subunits forms the central stalk rotor element with the F(1) delta and epsilon subunits. This is ATP synthase subunit c from Pseudoalteromonas translucida (strain TAC 125).